The following is a 445-amino-acid chain: C4-dicarboxylate transport protein 2 (445 aa).

Transmembrane regions (helical) follow at residues 24–44, 62–82, 96–116, 163–183, 201–221, 237–257, 334–354, and 366–386; these read ILYV…WLFP, LIKM…IAHI, LVYF…VGNL, GDIL…MALG, FGVI…AMAF, LIAL…GLIA, ALGV…AMLT, and FITL…GMAI.

It belongs to the dicarboxylate/amino acid:cation symporter (DAACS) (TC 2.A.23) family.

The protein localises to the cell inner membrane. Responsible for the transport of dicarboxylates such as succinate, fumarate, and malate from the periplasm across the membrane. The protein is C4-dicarboxylate transport protein 2 of Bradyrhizobium sp. (strain ORS 278).